Reading from the N-terminus, the 207-residue chain is Adenylyl-sulfate kinase (207 aa).

34–41 (GLSGSGKS) is an ATP binding site. The active-site Phosphoserine intermediate is Ser108.

This sequence belongs to the APS kinase family.

It catalyses the reaction adenosine 5'-phosphosulfate + ATP = 3'-phosphoadenylyl sulfate + ADP + H(+). The protein operates within sulfur metabolism; hydrogen sulfide biosynthesis; sulfite from sulfate: step 2/3. Catalyzes the synthesis of activated sulfate. The polypeptide is Adenylyl-sulfate kinase (Lactiplantibacillus plantarum (strain ATCC BAA-793 / NCIMB 8826 / WCFS1) (Lactobacillus plantarum)).